Consider the following 546-residue polypeptide: MTKYIFVTGGVVSSLGKGIAAASIAAILESRGLKVTMLKLDPYINVDPGTMSPFQHGEVFVTEDGAETDLDLGHYERFIHAKMKKSNNFTTGQVYESVITKERRGDYLGGTVQVIPHITDEIKLKMGEGAADADVAIVEIGGTVGDIESLPFLEAIRQMRSNHGRKNTLYVHLSYVPYIATAGEIKTKPTQHSVKELREIGIQPDILLCRMDRELPEDEKRKIALFCNVEENAVIGCYDSDSIYKVPGMLHAQGIDDIIAEQLQLDLPQADLSAWDRIIDAIEKPDHAIKIAMVGKYVDLTESYKSLTEALKHAGIHTRTKVDIIYVDSEEIERDGAESLRDMDAILVPGGFGKRGVEGKIKAVKFARENDIPYLGICLGMQIALIEYARDVAGMAGANSTEFDLDTNFPVVALIDEWVNHDGKIEKRDENSNMGGTMRLGGQQCDLVPGSLAARVYGSTEITERHRHRYEVNNYYIQRLEQAGLTISGRSAGHEKLVETIELTGHRWFFACQFHPEFTSTPRDGHPLFIAYVKAALAHQADKQAS.

The tract at residues 1 to 265 (MTKYIFVTGG…DDIIAEQLQL (265 aa)) is amidoligase domain. CTP is bound at residue Ser-13. Ser-13 serves as a coordination point for UTP. ATP contacts are provided by residues 14–19 (SLGKGI) and Asp-71. Residues Asp-71 and Glu-139 each coordinate Mg(2+). Residues 146–148 (DIE), 186–191 (KTKPTQ), and Lys-222 each bind CTP. Residues 186–191 (KTKPTQ) and Lys-222 contribute to the UTP site. The 253-residue stretch at 290 to 542 (KIAMVGKYVD…VKAALAHQAD (253 aa)) folds into the Glutamine amidotransferase type-1 domain. Residue Gly-351 participates in L-glutamine binding. Cys-378 (nucleophile; for glutamine hydrolysis) is an active-site residue. Residues 379–382 (LGMQ), Glu-402, and Arg-469 contribute to the L-glutamine site. Active-site residues include His-515 and Glu-517.

This sequence belongs to the CTP synthase family. In terms of assembly, homotetramer.

It carries out the reaction UTP + L-glutamine + ATP + H2O = CTP + L-glutamate + ADP + phosphate + 2 H(+). The enzyme catalyses L-glutamine + H2O = L-glutamate + NH4(+). The catalysed reaction is UTP + NH4(+) + ATP = CTP + ADP + phosphate + 2 H(+). It participates in pyrimidine metabolism; CTP biosynthesis via de novo pathway; CTP from UDP: step 2/2. Its activity is regulated as follows. Allosterically activated by GTP, when glutamine is the substrate; GTP has no effect on the reaction when ammonia is the substrate. The allosteric effector GTP functions by stabilizing the protein conformation that binds the tetrahedral intermediate(s) formed during glutamine hydrolysis. Inhibited by the product CTP, via allosteric rather than competitive inhibition. In terms of biological role, catalyzes the ATP-dependent amination of UTP to CTP with either L-glutamine or ammonia as the source of nitrogen. Regulates intracellular CTP levels through interactions with the four ribonucleotide triphosphates. This Chromobacterium violaceum (strain ATCC 12472 / DSM 30191 / JCM 1249 / CCUG 213 / NBRC 12614 / NCIMB 9131 / NCTC 9757 / MK) protein is CTP synthase.